Reading from the N-terminus, the 416-residue chain is Major royal jelly protein 8 (416 aa).

Positions 1-16 (MIRWLLLMYLGITCQG) are cleaved as a signal peptide. 8 N-linked (GlcNAc...) asparagine glycosylation sites follow: asparagine 24, asparagine 58, asparagine 93, asparagine 115, asparagine 158, asparagine 175, asparagine 196, and asparagine 215.

This sequence belongs to the major royal jelly protein family. In terms of tissue distribution, expressed at very low levels in the hypopharyngeal glands of worker honey bees (at protein level). Secreted into bee venom in the sting apparatus (at protein level). Expressed in the spermatheca of adult queen bees (at protein level); expression levels are higher in mated queens than in virgin queens. Along with Mrjp9 expressed at very low levels in the head of worker bees compared to other major royal jelly proteins.

It localises to the secreted. Its function is as follows. Component of bee sting venom. Component of royal jelly, a substance produced in the hypopharyngeal gland containing proteins, free amino acids, fatty acids, sugars and other nutrients, which is fed to developing larvae by worker nurse bees; may be present only at trace levels. All larvae are fed some royal jelly (also known as worker jelly) early in their development but it forms the principal source of nutrition for larvae destined to become queen bees. Produced in the spermatheca of adult queen bees, along with other major royal jelly proteins, where it may act as a nutrient supply for sperm stored by mated queens, or be involved in energy metabolism. The sequence is that of Major royal jelly protein 8 from Apis mellifera (Honeybee).